Reading from the N-terminus, the 1052-residue chain is RIMS-binding protein 2 (1052 aa).

The tract at residues 115–164 (GEYIRPLPQPGDRPEPLSAKPTFLSRSGSARCRSESDMENERNSNTSKQR) is disordered. Basic and acidic residues predominate over residues 146-156 (CRSESDMENER). The SH3 1 domain maps to 167–234 (GKVHLCVARY…PSNFVDFVQD (68 aa)). 3 Fibronectin type-III domains span residues 297-390 (VPYP…GKDV), 393-475 (APSH…KKEA), and 489-590 (PPQD…VPPT). 5 disordered regions span residues 584–615 (ELLV…DEHL), 629–666 (RAPG…PVST), 697–716 (SAGQ…PDFK), 767–787 (EMQL…NALK), and 805–829 (FPRG…YGRD). Pro residues predominate over residues 585–598 (LLVPPTPHPRPAPQ). The span at 645–654 (PGRRSPSPSR) shows a compositional bias: low complexity. 2 positions are modified to phosphoserine: Ser-704 and Ser-712. A phosphoserine mark is found at Ser-832 and Ser-839. A Phosphothreonine modification is found at Thr-841. 2 SH3 domains span residues 848 to 916 (LPAR…EIQA) and 952 to 1019 (VSTR…EVPD). Residues 1029–1052 (PSHYSQDTPMRSKAKRKKSVHFTP) form a disordered region. A compositionally biased stretch (basic residues) spans 1040-1052 (SKAKRKKSVHFTP).

The protein belongs to the RIMBP family. Interacts with RIMS1, RIMS2, CACNA1D and CACNA1B, and potentially with other Ca(2+) channel alpha-1 isoforms.

The protein resides in the cell membrane. It localises to the synapse. Functionally, plays a role in the synaptic transmission as bifunctional linker that interacts simultaneously with RIMS1, RIMS2, CACNA1D and CACNA1B. The protein is RIMS-binding protein 2 (RIMBP2) of Homo sapiens (Human).